The chain runs to 206 residues: Probable glutathione S-transferase 7 (206 aa).

The GST N-terminal domain maps to 2-79 (VHYKVSYFPI…YLARQFGING (78 aa)). Residues tyrosine 8, tryptophan 39, lysine 43, 49–51 (GQL), and 63–64 (QS) each bind glutathione. The GST C-terminal domain maps to 81-206 (CAWEEAQVNS…WLETRPVTPF (126 aa)).

This sequence belongs to the GST superfamily. Sigma family.

The catalysed reaction is RX + glutathione = an S-substituted glutathione + a halide anion + H(+). In terms of biological role, conjugation of reduced glutathione to a wide number of exogenous and endogenous hydrophobic electrophiles. May play a role in the detoxification of reactive oxygen species produced during pathogenic bacterial infection. The protein is Probable glutathione S-transferase 7 (gst-7) of Caenorhabditis elegans.